Reading from the N-terminus, the 388-residue chain is Processive diacylglycerol beta-glucosyltransferase (388 aa).

Belongs to the glycosyltransferase 28 family. UgtP subfamily.

Its subcellular location is the cell membrane. It catalyses the reaction a 1,2-diacyl-3-O-(beta-D-glucopyranosyl)-sn-glycerol + UDP-alpha-D-glucose = a 1,2-diacyl-3-O-(beta-D-Glc-(1-&gt;6)-beta-D-Glc)-sn-glycerol + UDP + H(+). It carries out the reaction a 1,2-diacyl-3-O-(beta-D-Glc-(1-&gt;6)-beta-D-Glc)-sn-glycerol + UDP-alpha-D-glucose = a 1,2-diacyl-3-O-(beta-D-Glc-(1-&gt;6)-beta-D-Glc-(1-&gt;6)-beta-D-Glc)-sn-glycerol + UDP + H(+). The catalysed reaction is a 1,2-diacyl-sn-glycerol + UDP-alpha-D-glucose = a 1,2-diacyl-3-O-(beta-D-glucopyranosyl)-sn-glycerol + UDP + H(+). The protein operates within glycolipid metabolism; diglucosyl-diacylglycerol biosynthesis. Processive glucosyltransferase involved in the biosynthesis of both the bilayer- and non-bilayer-forming membrane glucolipids. Is able to successively transfer up to three glucosyl residues to diacylglycerol (DAG), thereby catalyzing the formation of beta-monoglucosyl-DAG (3-O-(beta-D-glucopyranosyl)-1,2-diacyl-sn-glycerol), beta-diglucosyl-DAG (3-O-(beta-D-glucopyranosyl-beta-(1-&gt;6)-D-glucopyranosyl)-1,2-diacyl-sn-glycerol) and beta-triglucosyl-DAG (3-O-(beta-D-glucopyranosyl-beta-(1-&gt;6)-D-glucopyranosyl-beta-(1-&gt;6)-D-glucopyranosyl)-1,2-diacyl-sn-glycerol). Beta-diglucosyl-DAG is the predominant glycolipid found in Bacillales and is also used as a membrane anchor for lipoteichoic acid (LTA). The sequence is that of Processive diacylglycerol beta-glucosyltransferase from Bacillus thuringiensis (strain Al Hakam).